Here is a 148-residue protein sequence, read N- to C-terminus: 3-dehydroquinate dehydratase (148 aa).

Tyrosine 24 functions as the Proton acceptor in the catalytic mechanism. Substrate-binding residues include asparagine 80, histidine 86, and aspartate 93. Histidine 106 serves as the catalytic Proton donor. Substrate contacts are provided by residues isoleucine 107 to serine 108 and arginine 117.

Belongs to the type-II 3-dehydroquinase family. Homododecamer.

It catalyses the reaction 3-dehydroquinate = 3-dehydroshikimate + H2O. Its pathway is metabolic intermediate biosynthesis; chorismate biosynthesis; chorismate from D-erythrose 4-phosphate and phosphoenolpyruvate: step 3/7. Its function is as follows. Catalyzes a trans-dehydration via an enolate intermediate. This is 3-dehydroquinate dehydratase from Acidovorax sp. (strain JS42).